The sequence spans 160 residues: Ureidoglycolate lyase (160 aa).

Belongs to the ureidoglycolate lyase family. As to quaternary structure, homodimer. It depends on Ni(2+) as a cofactor.

It catalyses the reaction (S)-ureidoglycolate = urea + glyoxylate. Its pathway is nitrogen metabolism; (S)-allantoin degradation. Functionally, catalyzes the catabolism of the allantoin degradation intermediate (S)-ureidoglycolate, generating urea and glyoxylate. Involved in the utilization of allantoin as nitrogen source. The polypeptide is Ureidoglycolate lyase (Salmonella enteritidis).